Consider the following 738-residue polypeptide: Phosphoribosylformylglycinamidine synthase subunit PurL (738 aa).

His-53 is a catalytic residue. ATP-binding residues include Tyr-56 and Lys-95. Mg(2+) is bound at residue Glu-97. Residues 98 to 101 and Arg-120 contribute to the substrate site; that span reads SHNH. His-99 functions as the Proton acceptor in the catalytic mechanism. A Mg(2+)-binding site is contributed by Asp-121. Position 244 (Gln-244) interacts with substrate. Asp-274 is a binding site for Mg(2+). Residue 318–320 coordinates substrate; sequence ESQ. Asp-499 and Gly-536 together coordinate ATP. Asn-537 lines the Mg(2+) pocket. Ser-539 serves as a coordination point for substrate.

This sequence belongs to the FGAMS family. Monomer. Part of the FGAM synthase complex composed of 1 PurL, 1 PurQ and 2 PurS subunits.

The protein resides in the cytoplasm. The catalysed reaction is N(2)-formyl-N(1)-(5-phospho-beta-D-ribosyl)glycinamide + L-glutamine + ATP + H2O = 2-formamido-N(1)-(5-O-phospho-beta-D-ribosyl)acetamidine + L-glutamate + ADP + phosphate + H(+). It participates in purine metabolism; IMP biosynthesis via de novo pathway; 5-amino-1-(5-phospho-D-ribosyl)imidazole from N(2)-formyl-N(1)-(5-phospho-D-ribosyl)glycinamide: step 1/2. Part of the phosphoribosylformylglycinamidine synthase complex involved in the purines biosynthetic pathway. Catalyzes the ATP-dependent conversion of formylglycinamide ribonucleotide (FGAR) and glutamine to yield formylglycinamidine ribonucleotide (FGAM) and glutamate. The FGAM synthase complex is composed of three subunits. PurQ produces an ammonia molecule by converting glutamine to glutamate. PurL transfers the ammonia molecule to FGAR to form FGAM in an ATP-dependent manner. PurS interacts with PurQ and PurL and is thought to assist in the transfer of the ammonia molecule from PurQ to PurL. The sequence is that of Phosphoribosylformylglycinamidine synthase subunit PurL from Leuconostoc mesenteroides subsp. mesenteroides (strain ATCC 8293 / DSM 20343 / BCRC 11652 / CCM 1803 / JCM 6124 / NCDO 523 / NBRC 100496 / NCIMB 8023 / NCTC 12954 / NRRL B-1118 / 37Y).